Consider the following 211-residue polypeptide: LexA repressor (211 aa).

A DNA-binding region (H-T-H motif) is located at residues 35–55 (RAEIANFFGFKSANAAEEHLK). Catalysis depends on for autocatalytic cleavage activity residues Ser-128 and Lys-165.

The protein belongs to the peptidase S24 family. As to quaternary structure, homodimer.

The enzyme catalyses Hydrolysis of Ala-|-Gly bond in repressor LexA.. In terms of biological role, represses a number of genes involved in the response to DNA damage (SOS response), including recA and lexA. In the presence of single-stranded DNA, RecA interacts with LexA causing an autocatalytic cleavage which disrupts the DNA-binding part of LexA, leading to derepression of the SOS regulon and eventually DNA repair. The sequence is that of LexA repressor from Colwellia psychrerythraea (strain 34H / ATCC BAA-681) (Vibrio psychroerythus).